The following is a 303-amino-acid chain: Dipeptide transport system permease protein DppB (303 aa).

The next 7 membrane-spanning stretches (helical) occupy residues 9 to 29, 62 to 82, 93 to 113, 129 to 149, 166 to 186, 227 to 247, and 269 to 289; these read LGLLLLTLFLIVTLTFFMMQV, YFIYVGHMFTGNFGTSFIYTN, LPVSMQLGTQALILGTVLGAL, IFGFLSVLGISVPSFVIGTLI, GTFSQTIMPTIALSFAPMAVV, IPMLTLIGPMAAGLLTGSVLI, and FPVIMATTIVYAVILMVFILV. An ABC transmembrane type-1 domain is found at 93 to 290; that stretch reads LPVSMQLGTQ…VILMVFILVT (198 aa).

The protein belongs to the binding-protein-dependent transport system permease family. OppBC subfamily. In terms of assembly, the complex is composed of two ATP-binding proteins (DppD and DppF), two transmembrane proteins (DppB and DppC) and a solute-binding protein (DppA).

Its subcellular location is the cell membrane. Functionally, part of the ABC transporter DppABCDF involved in dipeptide transport. Responsible for the translocation of the substrate across the membrane. The chain is Dipeptide transport system permease protein DppB from Lactococcus lactis subsp. cremoris (strain MG1363).